We begin with the raw amino-acid sequence, 303 residues long: Acetylglutamate kinase (303 aa).

Substrate-binding positions include 67–68 (GG), arginine 89, and asparagine 193.

It belongs to the acetylglutamate kinase family. ArgB subfamily.

It localises to the cytoplasm. It catalyses the reaction N-acetyl-L-glutamate + ATP = N-acetyl-L-glutamyl 5-phosphate + ADP. The protein operates within amino-acid biosynthesis; L-arginine biosynthesis; N(2)-acetyl-L-ornithine from L-glutamate: step 2/4. Its function is as follows. Catalyzes the ATP-dependent phosphorylation of N-acetyl-L-glutamate. In Acinetobacter baylyi (strain ATCC 33305 / BD413 / ADP1), this protein is Acetylglutamate kinase.